A 1276-amino-acid chain; its full sequence is Component of gems protein 5 (1276 aa).

Residues Asn53 to Tyr55 form an interaction with U4 snRNA region. 8 WD repeats span residues Gly92–Asn139, Glu183–Ile223, Gly228–Lys268, Ala271–Gly336, Asn364–Glu405, Thr438–Gln481, Gly485–Tyr522, and Gly530–Phe574. Positions His138–Ser157 are disordered. Residues Ile586–Lys652 are disordered. Positions Asn598–Asn646 are enriched in low complexity. 2 WD repeats span residues Thr688–Ile727 and Glu729–Glu771. The span at Asn772–Glu793 shows a compositional bias: basic and acidic residues. Residues Asn772–Glu809 are disordered. Residues Asn778 to Lys829 adopt a coiled-coil conformation. A compositionally biased stretch (acidic residues) spans Asn794 to Glu809. WD repeat units lie at residues Gly863–Asn903 and Gly906–Val946. The disordered stretch occupies residues Ile967–Ile997. Positions Ser979 to Ser992 are enriched in polar residues.

Belongs to the WD repeat gemin-5 family. In terms of assembly, part of the core SMN complex.

Its subcellular location is the nucleus. The protein resides in the nucleoplasm. It is found in the gem. It localises to the cytoplasm. In terms of biological role, the SMN complex catalyzes the assembly of small nuclear ribonucleoproteins (snRNPs), the building blocks of the spliceosome, and thereby plays an important role in the splicing of cellular pre-mRNAs. Most spliceosomal snRNPs contain a common set of Sm proteins SNRPB, SNRPD1, SNRPD2, SNRPD3, SNRPE, SNRPF and SNRPG that assemble in a heptameric protein ring on the Sm site of the small nuclear RNA to form the core snRNP (Sm core). In the cytosol, the Sm proteins SNRPD1, SNRPD2, SNRPE, SNRPF and SNRPG are trapped in an inactive 6S pICln-Sm complex by the chaperone CLNS1A that controls the assembly of the core snRNP. To assemble core snRNPs, the SMN complex accepts the trapped 5Sm proteins from CLNS1A forming an intermediate. Binding of snRNA inside 5Sm ultimately triggers eviction of the SMN complex, thereby allowing binding of SNRPD3 and SNRPB to complete assembly of the core snRNP. Within the SMN complex, GEMIN5 recognizes and delivers the small nuclear RNAs (snRNAs) to the SMN complex. Binds to the 7-methylguanosine cap of RNA molecules. The polypeptide is Component of gems protein 5 (gemin5) (Dictyostelium discoideum (Social amoeba)).